A 553-amino-acid chain; its full sequence is Protein PNS1 (553 aa).

Positions 1–17 (MYGKSGPPPEGYVPQHP) are enriched in pro residues. The segment at 1-49 (MYGKSGPPPEGYVPQHPPAQGYAPHNPPPGYVHENPFQEPVPQGQEYSP) is disordered. Over 1-95 (MYGKSGPPPE…AGNRLKFNDW (95 aa)) the chain is Cytoplasmic. Residues 96–116 (PFTIIFLLTVGAFIAVAVLTL) traverse the membrane as a helical segment. Residues 117-143 (RGWSLSPTSNGSGIYDGDNTHTLNTNA) are Extracellular-facing. Asn-126 carries N-linked (GlcNAc...) asparagine glycosylation. Residues 144–164 (AILLLISCGVAVALSVFGLVL) traverse the membrane as a helical segment. At 165-170 (AGMYTK) the chain is on the cytoplasmic side. Residues 171–191 (FFIYAAMILNTVVGLGTAITY) traverse the membrane as a helical segment. The Extracellular portion of the chain corresponds to 192 to 196 (LVLRH). The chain crosses the membrane as a helical span at residues 197–217 (WSAGIVFMIFTILTAVCYWLM). At 218–243 (RSRIPFSVAVLRTVMSVMKKHPQTWL) the chain is on the cytoplasmic side. Residues 244-264 (VSLLGTIVSAAFSVIFSVVLV) form a helical membrane-spanning segment. The Extracellular segment spans residues 265–288 (ATYIKYDPKSENGGCDVSGGSCSR). A helical membrane pass occupies residues 289 to 309 (GKLIGILVLVFFCGFYISEVI). Over 310–346 (RNVIHCTIAGIYGCWYYFSKSDQGMPRWPAFGSLKRA) the chain is Cytoplasmic. A helical membrane pass occupies residues 347–367 (LTTSFGSICFGSLIVSLIQLL). At 368-385 (RQIIQLLRNGIISGISDS) the chain is on the extracellular side. A helical membrane pass occupies residues 386-406 (GWMQCLWLILDAVVGVFEWMA). Topologically, residues 407 to 450 (EYFNHYAYCFIALYGKPYLRAAKETWHMLREKGIDALINDNLIN) are cytoplasmic. A helical transmembrane segment spans residues 451–471 (LALGFYTLFVGYTTALFSYLF). The Extracellular portion of the chain corresponds to 472–483 (LRFTKPDYNSGG). The helical transmembrane segment at 484-504 (GFNAVLMAFSFLIAIQLTHVA) threads the bilayer. Topologically, residues 505–553 (TETIRSGTATFFVALGNDPEIFRVSYPQRFDEIFRAYPDVLNKLSHQHV) are cytoplasmic.

It belongs to the CTL (choline transporter-like) family.

It is found in the cell membrane. Its function is as follows. Probably involved in transport through the plasma membrane. This is Protein PNS1 (PNS1) from Eremothecium gossypii (strain ATCC 10895 / CBS 109.51 / FGSC 9923 / NRRL Y-1056) (Yeast).